The chain runs to 233 residues: Putative N-acetylmannosamine-6-phosphate 2-epimerase (233 aa).

The protein belongs to the NanE family.

The enzyme catalyses an N-acyl-D-glucosamine 6-phosphate = an N-acyl-D-mannosamine 6-phosphate. It participates in amino-sugar metabolism; N-acetylneuraminate degradation; D-fructose 6-phosphate from N-acetylneuraminate: step 3/5. Its function is as follows. Converts N-acetylmannosamine-6-phosphate (ManNAc-6-P) to N-acetylglucosamine-6-phosphate (GlcNAc-6-P). The chain is Putative N-acetylmannosamine-6-phosphate 2-epimerase from Yersinia pseudotuberculosis serotype IB (strain PB1/+).